The primary structure comprises 393 residues: Methylthioribose kinase (393 aa).

Residues asparagine 38, lysine 53, and 107–109 (EDL) each bind ATP. Aspartate 225 contacts substrate. 242–244 (DPE) provides a ligand contact to ATP. Residue arginine 332 participates in substrate binding.

It belongs to the methylthioribose kinase family. Homodimer.

The enzyme catalyses 5-(methylsulfanyl)-D-ribose + ATP = 5-(methylsulfanyl)-alpha-D-ribose 1-phosphate + ADP + H(+). The protein operates within amino-acid biosynthesis; L-methionine biosynthesis via salvage pathway; S-methyl-5-thio-alpha-D-ribose 1-phosphate from S-methyl-5'-thioadenosine (hydrolase route): step 2/2. Functionally, catalyzes the phosphorylation of methylthioribose into methylthioribose-1-phosphate. The polypeptide is Methylthioribose kinase (Bacillus cereus (strain B4264)).